The sequence spans 345 residues: D-fructose 1,6-bisphosphatase class 2/sedoheptulose 1,7-bisphosphatase (345 aa).

Residues D33, E57, D97, and E100 each coordinate Mn(2+). Substrate-binding positions include 100–102, Y131, 176–178, and 198–200; these read EGT, RPR, and DGD. E225 provides a ligand contact to Mn(2+).

It belongs to the FBPase class 2 family. In terms of assembly, homotetramer. Mn(2+) serves as cofactor.

It carries out the reaction beta-D-fructose 1,6-bisphosphate + H2O = beta-D-fructose 6-phosphate + phosphate. It catalyses the reaction D-sedoheptulose 1,7-bisphosphate + H2O = D-sedoheptulose 7-phosphate + phosphate. It participates in carbohydrate biosynthesis; Calvin cycle. In terms of biological role, catalyzes the hydrolysis of fructose 1,6-bisphosphate (Fru 1,6-P2) and sedoheptulose 1,7-bisphosphate (Sed 1,7-P2) to fructose 6-phosphate and sedoheptulose 7-phosphate, respectively. The protein is D-fructose 1,6-bisphosphatase class 2/sedoheptulose 1,7-bisphosphatase of Synechocystis sp. (strain ATCC 27184 / PCC 6803 / Kazusa).